The sequence spans 217 residues: MAGDDHLISGLYAITDAHLMPEPVFLARAEAALRGGARILQYRDKGDVVTDARRRRMQAGALRELCAQYGALFVVNDDPRLARVVGAPALHVGAEDAPPAALRAQFGRAILIGVSCYGSVPQAQEAATQGADYVAFGSFFASPSKPQAPVVSVDVLTAARAMIDLPIVAIGGITEANGRALIAAGADALAVISGVFAAEDVEGAARRFTALFNNRKE.

Residues 41–45 (QYRDK) and asparagine 76 each bind 4-amino-2-methyl-5-(diphosphooxymethyl)pyrimidine. Residues aspartate 77 and aspartate 96 each contribute to the Mg(2+) site. Serine 115 contributes to the 4-amino-2-methyl-5-(diphosphooxymethyl)pyrimidine binding site. 142-144 (SPS) contacts 2-[(2R,5Z)-2-carboxy-4-methylthiazol-5(2H)-ylidene]ethyl phosphate. A 4-amino-2-methyl-5-(diphosphooxymethyl)pyrimidine-binding site is contributed by lysine 145. Residues glycine 172 and 192–193 (IS) contribute to the 2-[(2R,5Z)-2-carboxy-4-methylthiazol-5(2H)-ylidene]ethyl phosphate site.

It belongs to the thiamine-phosphate synthase family. Requires Mg(2+) as cofactor.

It carries out the reaction 2-[(2R,5Z)-2-carboxy-4-methylthiazol-5(2H)-ylidene]ethyl phosphate + 4-amino-2-methyl-5-(diphosphooxymethyl)pyrimidine + 2 H(+) = thiamine phosphate + CO2 + diphosphate. It catalyses the reaction 2-(2-carboxy-4-methylthiazol-5-yl)ethyl phosphate + 4-amino-2-methyl-5-(diphosphooxymethyl)pyrimidine + 2 H(+) = thiamine phosphate + CO2 + diphosphate. The catalysed reaction is 4-methyl-5-(2-phosphooxyethyl)-thiazole + 4-amino-2-methyl-5-(diphosphooxymethyl)pyrimidine + H(+) = thiamine phosphate + diphosphate. It functions in the pathway cofactor biosynthesis; thiamine diphosphate biosynthesis; thiamine phosphate from 4-amino-2-methyl-5-diphosphomethylpyrimidine and 4-methyl-5-(2-phosphoethyl)-thiazole: step 1/1. In terms of biological role, condenses 4-methyl-5-(beta-hydroxyethyl)thiazole monophosphate (THZ-P) and 2-methyl-4-amino-5-hydroxymethyl pyrimidine pyrophosphate (HMP-PP) to form thiamine monophosphate (TMP). The sequence is that of Thiamine-phosphate synthase from Acidithiobacillus ferrooxidans (strain ATCC 23270 / DSM 14882 / CIP 104768 / NCIMB 8455) (Ferrobacillus ferrooxidans (strain ATCC 23270)).